Here is a 143-residue protein sequence, read N- to C-terminus: Transcriptional regulator MraZ (143 aa).

SpoVT-AbrB domains follow at residues 5–47 (TYTP…PRSE) and 76–119 (TDEQ…DAQA).

The protein belongs to the MraZ family. As to quaternary structure, forms oligomers.

The protein localises to the cytoplasm. It localises to the nucleoid. The sequence is that of Transcriptional regulator MraZ from Mycobacterium ulcerans (strain Agy99).